A 367-amino-acid polypeptide reads, in one-letter code: Choline-phosphate cytidylyltransferase A (367 aa).

Methionine 1 carries the post-translational modification N-acetylmethionine. Residues 1 to 31 are disordered; that stretch reads MDAQSSAKVNSRKRRKEVPGPNGATEEDGIP. Lysine 8 bears the N6-acetyllysine mark. CTP is bound by residues isoleucine 84, phenylalanine 85, histidine 92, and lysine 122. The phosphocholine site is built by lysine 122 and tryptophan 151. Positions 168, 169, 173, 195, 196, 197, and 200 each coordinate CTP. Amphipathic regions lie at residues 228–287 and 298–315; these read KELN…EFIG and ALKHMLKEGKGRMLQAIS. Serine 233 is modified (phosphoserine). An autoinhibitory (AI) region spans residues 272-293; the sequence is IDLIQKWEEKSREFIGSFLEMF. The tract at residues 313 to 367 is disordered; that stretch reads AISPKQSPSSSPTHERSPSPSFRWPFSGKTSPSSSPASLSRCKAVTCDISEDEED. At serine 315 the chain carries Phosphoserine; by PKC. Residues 315–324 show a composition bias toward polar residues; that stretch reads SPKQSPSSSP. A phosphoserine mark is found at serine 319, serine 321, serine 322, and serine 323. Residues 319–324 form repeat 1; that stretch reads SPSSSP. The segment at 319–348 is 3 X repeats; that stretch reads SPSSSPTHERSPSPSFRWPFSGKTSPSSSP. Threonine 325 is modified (phosphothreonine). Phosphoserine is present on residues serine 329 and serine 331. The 2; approximate repeat unit spans residues 329-333; it reads SPSPS. Residues 330–352 show a composition bias toward low complexity; the sequence is PSPSFRWPFSGKTSPSSSPASLS. At serine 333 the chain carries Phosphoserine; by PKC. Phosphothreonine is present on threonine 342. Serine 343, serine 345, serine 346, serine 347, serine 350, and serine 352 each carry phosphoserine. Repeat unit 3 spans residues 343–348; sequence SPSSSP. Threonine 358 carries the phosphothreonine modification. At serine 362 the chain carries Phosphoserine; by CK2.

Belongs to the cytidylyltransferase family. Homodimer. In terms of processing, the serine residues of the C-terminus are phosphorylated. The inactive soluble form is stabilized by phosphorylation, the active membrane bound form is promoted by anionic lipids or diacylglycerol, and is stabilized by dephosphorylation. The N-terminus is blocked. Post-translationally, monoubiquitinated by the SCF(FBXL2) complex, leading to proteasomal degradation.

It is found in the cytoplasm. Its subcellular location is the cytosol. The protein localises to the membrane. It localises to the endoplasmic reticulum membrane. The protein resides in the nucleus. The enzyme catalyses phosphocholine + CTP + H(+) = CDP-choline + diphosphate. The protein operates within phospholipid metabolism; phosphatidylcholine biosynthesis; phosphatidylcholine from phosphocholine: step 1/2. With respect to regulation, interconverts between an inactive cytosolic form and an active membrane-bound form. Activation involves disruption of an inhibitory interaction between helices at the base of the active site and the autoinhibitory (AI) region. Activated by N-methylethanolamine. Activated by oleic acid-containing phosphatidylcholine vesicles. In terms of biological role, catalyzes the key rate-limiting step in the CDP-choline pathway for phosphatidylcholine biosynthesis. This is Choline-phosphate cytidylyltransferase A (Pcyt1a) from Rattus norvegicus (Rat).